The chain runs to 87 residues: Cell division topological specificity factor (87 aa).

The protein belongs to the MinE family.

Functionally, prevents the cell division inhibition by proteins MinC and MinD at internal division sites while permitting inhibition at polar sites. This ensures cell division at the proper site by restricting the formation of a division septum at the midpoint of the long axis of the cell. The chain is Cell division topological specificity factor from Aliivibrio fischeri (strain ATCC 700601 / ES114) (Vibrio fischeri).